A 583-amino-acid chain; its full sequence is Mitogen-activated protein kinase 4 (583 aa).

The 293-residue stretch at 20–312 (FIDFQPLGFG…AEMGLQHPYM (293 aa)) folds into the Protein kinase domain. ATP-binding positions include 26–34 (LGFGVNGLV) and lysine 49. The Proton acceptor role is filled by aspartate 149. Serine 186 is modified (phosphoserine; by PAK1, PAK2 and PAK3). An SEG motif motif is present at residues 186–188 (SEG). The FRIEDE motif motif lies at 328–333 (FRIEDE). 2 stretches are compositionally biased toward basic and acidic residues: residues 366–379 (DRCQ…RDPR) and 391–410 (VDPR…QSHS). The disordered stretch occupies residues 366–410 (DRCQDASEVQRDPRAGSTPLAEDVQVDPRKDSQSSSERFLEQSHS). Serine 430 is modified (phosphoserine). The segment at 495–531 (STQSGSERASPPPDAPEPRLSASPPGHPTPIDGGASP) is disordered.

The protein belongs to the protein kinase superfamily. CMGC Ser/Thr protein kinase family. MAP kinase subfamily. Homodimer. Heterodimer with ERK3/MAPK6. Interacts with (via FRIEDE motif) MAPKAPK5. The cofactor is Mg(2+). Post-translationally, phosphorylated at Ser-186 by PAK1, PAK2 and PAK3 resulting in catalytic activation. Phosphorylated by MAPKAPK5 at other sites.

The protein localises to the cytoplasm. The protein resides in the nucleus. The catalysed reaction is L-seryl-[protein] + ATP = O-phospho-L-seryl-[protein] + ADP + H(+). The enzyme catalyses L-threonyl-[protein] + ATP = O-phospho-L-threonyl-[protein] + ADP + H(+). With respect to regulation, activated by phosphorylation at Ser-186. Its function is as follows. Atypical MAPK protein. Phosphorylates microtubule-associated protein 2 (MAP2) and MAPKAPK5. The precise role of the complex formed with MAPKAPK5 is still unclear, but the complex follows a complex set of phosphorylation events: upon interaction with atypical MAPKAPK5, ERK4/MAPK4 is phosphorylated at Ser-186 and then mediates phosphorylation and activation of MAPKAPK5, which in turn phosphorylates ERK4/MAPK4. May promote entry in the cell cycle. This Mus musculus (Mouse) protein is Mitogen-activated protein kinase 4 (Mapk4).